A 364-amino-acid polypeptide reads, in one-letter code: Histidinol-phosphate aminotransferase (364 aa).

Lysine 225 is modified (N6-(pyridoxal phosphate)lysine).

Belongs to the class-II pyridoxal-phosphate-dependent aminotransferase family. Histidinol-phosphate aminotransferase subfamily. In terms of assembly, homodimer. Pyridoxal 5'-phosphate serves as cofactor.

It catalyses the reaction L-histidinol phosphate + 2-oxoglutarate = 3-(imidazol-4-yl)-2-oxopropyl phosphate + L-glutamate. It participates in amino-acid biosynthesis; L-histidine biosynthesis; L-histidine from 5-phospho-alpha-D-ribose 1-diphosphate: step 7/9. The sequence is that of Histidinol-phosphate aminotransferase from Sulfurovum sp. (strain NBC37-1).